We begin with the raw amino-acid sequence, 298 residues long: N-acetylmuramic acid 6-phosphate etherase (298 aa).

An SIS domain is found at 55 to 218 (ITESLRRGGR…STASMVRLGK (164 aa)). Residue glutamate 83 is the Proton donor of the active site. The active site involves glutamate 114.

It belongs to the GCKR-like family. MurNAc-6-P etherase subfamily. Homodimer.

It carries out the reaction N-acetyl-D-muramate 6-phosphate + H2O = N-acetyl-D-glucosamine 6-phosphate + (R)-lactate. Its pathway is amino-sugar metabolism; N-acetylmuramate degradation. Functionally, specifically catalyzes the cleavage of the D-lactyl ether substituent of MurNAc 6-phosphate, producing GlcNAc 6-phosphate and D-lactate. This is N-acetylmuramic acid 6-phosphate etherase from Mycolicibacterium smegmatis (strain ATCC 700084 / mc(2)155) (Mycobacterium smegmatis).